The primary structure comprises 457 residues: MMEGQQHGEQLKRGLKNRHIQLIALGGAIGTGLFLGSASVIQSAGPGIILGYAIAGFIAFLIMRQLGEMVVEEPVAGSFSHFAYKYWGSFAGFASGWNYWVLYVLVAMAELTAVGKYIQFWYPEIPTWVSAAVFFVVINAINLTNVKVFGEMEFWFAIIKVIAVVAMIIFGGWLLFSGNGGPQATVSNLWDQGGFLPHGFTGLVMMMAIIMFSFGGLELVGITAAEADNPEQSIPKATNQVIYRILIFYIGSLAVLLSLMPWTRVTADTSPFVLIFHELGDTFVANALNIVVLTAALSVYNSCVYCNSRMLFGLAQQGNAPKALASVDKRGVPVNTILVSALVTALCVLINYLAPESAFGLLMALVVSALVINWAMISLAHMKFRRAKQEQGVVTRFPALLYPLGNWICLLFMAAVLVIMLMTPGMAISVYLIPVWLIVLGIGYLFKEKTAKAVKAH.

The Cytoplasmic portion of the chain corresponds to 1–18 (MMEGQQHGEQLKRGLKNR). A helical transmembrane segment spans residues 19–39 (HIQLIALGGAIGTGLFLGSAS). At 40-42 (VIQ) the chain is on the periplasmic side. The helical transmembrane segment at 43-63 (SAGPGIILGYAIAGFIAFLIM) threads the bilayer. Topologically, residues 64–98 (RQLGEMVVEEPVAGSFSHFAYKYWGSFAGFASGWN) are cytoplasmic. A helical transmembrane segment spans residues 99 to 119 (YWVLYVLVAMAELTAVGKYIQ). The Periplasmic segment spans residues 120-124 (FWYPE). A helical transmembrane segment spans residues 125–145 (IPTWVSAAVFFVVINAINLTN). Residues 146–147 (VK) are Cytoplasmic-facing. The helical transmembrane segment at 148–168 (VFGEMEFWFAIIKVIAVVAMI) threads the bilayer. Residues 169-192 (IFGGWLLFSGNGGPQATVSNLWDQ) are Periplasmic-facing. The chain crosses the membrane as a helical span at residues 193 to 213 (GGFLPHGFTGLVMMMAIIMFS). Residues 214–239 (FGGLELVGITAAEADNPEQSIPKATN) lie on the Cytoplasmic side of the membrane. Residues 240–260 (QVIYRILIFYIGSLAVLLSLM) traverse the membrane as a helical segment. The Periplasmic segment spans residues 261–279 (PWTRVTADTSPFVLIFHEL). Residues 280–300 (GDTFVANALNIVVLTAALSVY) form a helical membrane-spanning segment. The Cytoplasmic segment spans residues 301–330 (NSCVYCNSRMLFGLAQQGNAPKALASVDKR). A helical membrane pass occupies residues 331-351 (GVPVNTILVSALVTALCVLIN). Residues 352 to 359 (YLAPESAF) lie on the Periplasmic side of the membrane. Residues 360–380 (GLLMALVVSALVINWAMISLA) form a helical membrane-spanning segment. Residues 381–402 (HMKFRRAKQEQGVVTRFPALLY) are Cytoplasmic-facing. The helical transmembrane segment at 403–423 (PLGNWICLLFMAAVLVIMLMT) threads the bilayer. At 424 to 426 (PGM) the chain is on the periplasmic side. Residues 427-447 (AISVYLIPVWLIVLGIGYLFK) form a helical membrane-spanning segment. Residues 448-457 (EKTAKAVKAH) lie on the Cytoplasmic side of the membrane.

Belongs to the amino acid-polyamine-organocation (APC) superfamily. Amino acid transporter (AAT) (TC 2.A.3.1) family.

The protein resides in the cell inner membrane. It catalyses the reaction L-phenylalanine(in) + H(+)(in) = L-phenylalanine(out) + H(+)(out). It carries out the reaction L-tryptophan(in) + H(+)(in) = L-tryptophan(out) + H(+)(out). The enzyme catalyses L-tyrosine(in) + H(+)(in) = L-tyrosine(out) + H(+)(out). Its activity is regulated as follows. Strong, mutual inhibition of uptake by tyrosine, phenylalanine, and tryptophan. Transport is also inhibited by the aromatic analogs p-fluorophenylalanine, beta-2-thienylalanine and 5-methyltryptophan. Its function is as follows. Permease that is involved in the active transport across the cytoplasmic membrane of all three aromatic amino acids, phenylalanine, tyrosine and tryptophan. This is Aromatic amino acid transport protein AroP from Escherichia coli (strain K12).